The sequence spans 468 residues: Tyramine receptor tyra-2 (468 aa).

Residues Met-1–Ser-23 are Extracellular-facing. A helical membrane pass occupies residues Ala-24–Leu-43. The Cytoplasmic portion of the chain corresponds to Tyr-44–Asn-54. Residues Leu-55 to Val-77 traverse the membrane as a helical segment. Topologically, residues Tyr-78–Cys-91 are extracellular. Cys-91 and Cys-177 are joined by a disulfide. The helical transmembrane segment at Glu-92–Leu-114 threads the bilayer. The Cytoplasmic portion of the chain corresponds to Asp-115–Thr-134. A helical membrane pass occupies residues Ala-135–Trp-157. Over Lys-158 to Thr-186 the chain is Extracellular. Residue Asn-171 is glycosylated (N-linked (GlcNAc...) asparagine). The helical transmembrane segment at Val-187–Tyr-209 threads the bilayer. Topologically, residues Gln-210–Lys-387 are cytoplasmic. Residues Asp-252–Thr-306 are disordered. Composition is skewed to acidic residues over residues Ala-255–Glu-265 and Ile-281–Ser-292. The helical transmembrane segment at Val-388 to Val-410 threads the bilayer. At Gln-411–Met-424 the chain is on the extracellular side. Residues Phe-425–Phe-444 traverse the membrane as a helical segment. The Cytoplasmic segment spans residues Asn-445–Val-468.

This sequence belongs to the G-protein coupled receptor 1 family. In terms of tissue distribution, expressed in the pharyngeal neurons, MCL/R and NSML/R and the AS group of amphidial sensory neurons, ASEL/R, AGSL/R, ASHL/R and ASIL/R.

It is found in the cell membrane. In terms of biological role, G-protein coupled receptor for tyramine, a known neurotransmitter and neuromodulator and direct precursor of octopamine. Expression in amphidial sensory neurons suggests a role in chemosensation. In Caenorhabditis elegans, this protein is Tyramine receptor tyra-2 (tyra-2).